Consider the following 1077-residue polypeptide: Hemoglobin and hemoglobin-haptoglobin-binding protein A (1077 aa).

Positions 1–24 are cleaved as a signal peptide; that stretch reads MTNFRLNVLAYSVMLGLTASVAYA. The tract at residues 25 to 72 is disordered; the sequence is EPTNQPTNQPTNQPTNQPTNQPTNQPTNQPTNQPTNQPTNQPTNQNSN. 11 repeat units span residues 26–29, 30–33, 34–37, 38–41, 42–45, 46–49, 50–53, 54–57, 58–61, 62–65, and 66–69. Positions 26-69 are 11 X 4 AA tandem repeats of P-T-N-Q; that stretch reads PTNQPTNQPTNQPTNQPTNQPTNQPTNQPTNQPTNQPTNQPTNQ. Over residues 26–70 the composition is skewed to low complexity; sequence PTNQPTNQPTNQPTNQPTNQPTNQPTNQPTNQPTNQPTNQPTNQN. Residues 78–85 carry the TonB box motif; that stretch reads EQINVSGS. Residues 89–216 enclose the TBDR plug domain; the sequence is TDTKAPPKIA…LGGSVSLDTK (128 aa). The TBDR beta-barrel domain maps to 224 to 1077; that stretch reads NKNYYASYKR…NYRMSVQFEF (854 aa). Positions 1060 to 1077 match the TonB C-terminal box motif; sequence NRFYAPERNYRMSVQFEF.

The protein belongs to the TonB-dependent receptor family. Hemoglobin/haptoglobin binding protein subfamily.

Its subcellular location is the cell outer membrane. Acts as a receptor for hemoglobin or the hemoglobin/haptoglobin complex of the human host and is required for heme uptake. The sequence is that of Hemoglobin and hemoglobin-haptoglobin-binding protein A (hgpA) from Haemophilus influenzae.